Consider the following 193-residue polypeptide: Leucyl/phenylalanyl-tRNA--protein transferase (193 aa).

Belongs to the L/F-transferase family.

The protein localises to the cytoplasm. The enzyme catalyses N-terminal L-lysyl-[protein] + L-leucyl-tRNA(Leu) = N-terminal L-leucyl-L-lysyl-[protein] + tRNA(Leu) + H(+). It catalyses the reaction N-terminal L-arginyl-[protein] + L-leucyl-tRNA(Leu) = N-terminal L-leucyl-L-arginyl-[protein] + tRNA(Leu) + H(+). It carries out the reaction L-phenylalanyl-tRNA(Phe) + an N-terminal L-alpha-aminoacyl-[protein] = an N-terminal L-phenylalanyl-L-alpha-aminoacyl-[protein] + tRNA(Phe). Its function is as follows. Functions in the N-end rule pathway of protein degradation where it conjugates Leu, Phe and, less efficiently, Met from aminoacyl-tRNAs to the N-termini of proteins containing an N-terminal arginine or lysine. The protein is Leucyl/phenylalanyl-tRNA--protein transferase of Akkermansia muciniphila (strain ATCC BAA-835 / DSM 22959 / JCM 33894 / BCRC 81048 / CCUG 64013 / CIP 107961 / Muc).